The primary structure comprises 414 residues: Voltage-gated ClC-type chloride channel ClcB (414 aa).

A run of 11 helical transmembrane segments spans residues 5–25, 54–74, 116–136, 147–167, 169–189, 220–240, 255–275, 292–312, 327–347, 353–373, and 381–401; these read LVIS…FHQA, ALTP…YQRY, SAIG…SVFA, LWVA…PLAG, LFIA…PVVI, VQYF…PLFL, LLPP…SLIF, TPPG…AVLA, LFVG…WPVL, LLMA…APIM, and MTGE…ATTI.

Belongs to the chloride channel (TC 2.A.49) family. ClcB subfamily.

Its subcellular location is the cell inner membrane. Its function is as follows. Probably acts as an electrical shunt for an outwardly-directed proton pump that is linked to amino acid decarboxylation, as part of the extreme acid resistance (XAR) response. This Yersinia pseudotuberculosis serotype O:1b (strain IP 31758) protein is Voltage-gated ClC-type chloride channel ClcB.